Reading from the N-terminus, the 148-residue chain is Large ribosomal subunit protein uL15 (148 aa).

The interval 14–54 (HRKKRVGCGEGGGHGKTSGRGGKGQTARSGSSIRPGFEGGQ) is disordered. Residues 21–37 (CGEGGGHGKTSGRGGKG) are compositionally biased toward gly residues.

The protein belongs to the universal ribosomal protein uL15 family. As to quaternary structure, part of the 50S ribosomal subunit.

Binds to the 23S rRNA. This is Large ribosomal subunit protein uL15 from Opitutus terrae (strain DSM 11246 / JCM 15787 / PB90-1).